The chain runs to 138 residues: Small ribosomal subunit protein uS11c (138 aa).

The tract at residues 1 to 22 is disordered; sequence MAKPILRVGSRKNTRSASRKNV. A compositionally biased stretch (basic residues) spans 9-22; it reads GSRKNTRSASRKNV.

Belongs to the universal ribosomal protein uS11 family. In terms of assembly, part of the 30S ribosomal subunit.

It localises to the plastid. The protein resides in the chloroplast. The sequence is that of Small ribosomal subunit protein uS11c from Draba nemorosa (Woodland whitlowgrass).